The following is a 268-amino-acid chain: Phosphatidylglycerol--prolipoprotein diacylglyceryl transferase (268 aa).

The next 7 membrane-spanning stretches (helical) occupy residues 10-30 (VALA…LIGI), 56-76 (LVFW…VLFY), 92-112 (WKGG…ALWF), 120-140 (FFEL…AGRI), 174-194 (PSQL…LWLF), 202-222 (MAVS…VEFV), and 236-256 (WLTM…GLIW). An a 1,2-diacyl-sn-glycero-3-phospho-(1'-sn-glycerol)-binding site is contributed by Arg139.

The protein belongs to the Lgt family.

It localises to the cell inner membrane. The catalysed reaction is L-cysteinyl-[prolipoprotein] + a 1,2-diacyl-sn-glycero-3-phospho-(1'-sn-glycerol) = an S-1,2-diacyl-sn-glyceryl-L-cysteinyl-[prolipoprotein] + sn-glycerol 1-phosphate + H(+). Its pathway is protein modification; lipoprotein biosynthesis (diacylglyceryl transfer). Its function is as follows. Catalyzes the transfer of the diacylglyceryl group from phosphatidylglycerol to the sulfhydryl group of the N-terminal cysteine of a prolipoprotein, the first step in the formation of mature lipoproteins. The chain is Phosphatidylglycerol--prolipoprotein diacylglyceryl transferase from Pseudomonas putida (strain ATCC 700007 / DSM 6899 / JCM 31910 / BCRC 17059 / LMG 24140 / F1).